The following is an 86-amino-acid chain: Acyl carrier protein (86 aa).

A Carrier domain is found at 5–80 (EEILKKVQSI…EAVEFIIDKI (76 aa)). The residue at position 40 (Ser-40) is an O-(pantetheine 4'-phosphoryl)serine.

Belongs to the acyl carrier protein (ACP) family. Post-translationally, 4'-phosphopantetheine is transferred from CoA to a specific serine of apo-ACP by AcpS. This modification is essential for activity because fatty acids are bound in thioester linkage to the sulfhydryl of the prosthetic group.

It localises to the plastid. The protein localises to the chloroplast. Its pathway is lipid metabolism; fatty acid biosynthesis. Functionally, carrier of the growing fatty acid chain in fatty acid biosynthesis. This chain is Acyl carrier protein, found in Cyanidium caldarium (Red alga).